The following is a 688-amino-acid chain: Glycine--tRNA ligase beta subunit (688 aa).

The protein belongs to the class-II aminoacyl-tRNA synthetase family. As to quaternary structure, tetramer of two alpha and two beta subunits.

The protein localises to the cytoplasm. The catalysed reaction is tRNA(Gly) + glycine + ATP = glycyl-tRNA(Gly) + AMP + diphosphate. This Syntrophotalea carbinolica (strain DSM 2380 / NBRC 103641 / GraBd1) (Pelobacter carbinolicus) protein is Glycine--tRNA ligase beta subunit.